Consider the following 236-residue polypeptide: Small ribosomal subunit protein uS2c (236 aa).

Belongs to the universal ribosomal protein uS2 family.

Its subcellular location is the plastid. The protein resides in the chloroplast. The protein is Small ribosomal subunit protein uS2c (rps2) of Platanus occidentalis (Sycamore).